A 1044-amino-acid polypeptide reads, in one-letter code: Pre-mRNA-splicing factor ATP-dependent RNA helicase DHX16 (1044 aa).

2 disordered regions span residues 101–210 (EDSE…AYEE) and 374–394 (LQGN…QKES). Residues Ser103, Ser106, and Ser107 each carry the phosphoserine modification. The segment covering 119-130 (QKKRKKRKHLRK) has biased composition (basic residues). The span at 134–143 (EEEEEEEEEA) shows a compositional bias: acidic residues. Ser163 is subject to Phosphoserine. Basic and acidic residues predominate over residues 169 to 210 (RTERERLQDLEERDAFAERVRQRDKDRTRNVLERSDKKAYEE). A Helicase ATP-binding domain is found at 412–576 (LAAIANHQVL…FDDAPVFRIP (165 aa)). Residue 425-432 (GETGSGKT) participates in ATP binding. The short motif at 523–526 (DEAH) is the DEAH box element. In terms of domain architecture, Helicase C-terminal spans 601 to 774 (SVLQIHVTQP…NVVLLLKSLG (174 aa)). Residue Thr715 is modified to Phosphothreonine.

It belongs to the DEAD box helicase family. DEAH subfamily. DDX16/PRP8 sub-subfamily. In terms of assembly, component of pre-catalytic spliceosome complexes. Component of the minor spliceosome, which splices U12-type introns. Interacts with GPKOW. Interacts with TRIM6. Interacts with RIGI.

It is found in the nucleus. The protein resides in the nucleoplasm. The protein localises to the cytoplasm. The catalysed reaction is ATP + H2O = ADP + phosphate + H(+). Required for pre-mRNA splicing as a component of the spliceosome. Contributes to pre-mRNA splicing after spliceosome formation and prior to the first transesterification reaction. As a component of the minor spliceosome, involved in the splicing of U12-type introns in pre-mRNAs. Also plays a role in innate antiviral response by acting as a pattern recognition receptor sensing splicing signals in viral RNA. Mechanistically, TRIM6 promotes the interaction between unanchored 'Lys-48'-polyubiquitin chains and DHX16, leading to DHX16 interaction with RIGI and ssRNA to amplify RIGI-dependent innate antiviral immune responses. This Pan troglodytes (Chimpanzee) protein is Pre-mRNA-splicing factor ATP-dependent RNA helicase DHX16 (DHX16).